Consider the following 109-residue polypeptide: Nucleoid-associated protein Shal_1591 (109 aa).

The segment at 87 to 109 (NQKEKMAEVTGGMQLPPGMKMPF) is disordered.

It belongs to the YbaB/EbfC family. In terms of assembly, homodimer.

It is found in the cytoplasm. It localises to the nucleoid. Binds to DNA and alters its conformation. May be involved in regulation of gene expression, nucleoid organization and DNA protection. This is Nucleoid-associated protein Shal_1591 from Shewanella halifaxensis (strain HAW-EB4).